The chain runs to 174 residues: Gamma-crystallin C (174 aa).

Beta/gamma crystallin 'Greek key' domains follow at residues 2–40 (GKIT…RVDS) and 41–83 (GCWM…CLIS). C23 carries the post-translational modification S-methylcysteine. The segment at 84–87 (DTSS) is connecting peptide. Beta/gamma crystallin 'Greek key' domains follow at residues 88 to 128 (HRLR…HVLE) and 129 to 171 (GCWV…RRVV).

Belongs to the beta/gamma-crystallin family.

Its function is as follows. Crystallins are the dominant structural components of the vertebrate eye lens. This chain is Gamma-crystallin C (CRYGC), found in Bos taurus (Bovine).